Reading from the N-terminus, the 622-residue chain is DNA polymerase II small subunit (622 aa).

The segment at 76–113 (ISTGEGSQKVPDHEELEKITNESSVESSISTGETPKTE) is disordered. A compositionally biased stretch (basic and acidic residues) spans 85-95 (VPDHEELEKIT). Positions 96-109 (NESSVESSISTGET) are enriched in polar residues.

It belongs to the DNA polymerase delta/II small subunit family. As to quaternary structure, heterodimer of a large subunit and a small subunit.

The enzyme catalyses DNA(n) + a 2'-deoxyribonucleoside 5'-triphosphate = DNA(n+1) + diphosphate. The catalysed reaction is Exonucleolytic cleavage in the 3'- to 5'-direction to yield nucleoside 5'-phosphates.. In terms of biological role, possesses two activities: a DNA synthesis (polymerase) and an exonucleolytic activity that degrades single-stranded DNA in the 3' to 5' direction. Has a template-primer preference which is characteristic of a replicative DNA polymerase. The polypeptide is DNA polymerase II small subunit (polB) (Pyrococcus horikoshii (strain ATCC 700860 / DSM 12428 / JCM 9974 / NBRC 100139 / OT-3)).